The following is a 638-amino-acid chain: MLQQIRGPADLQHLSQAQLRELAAEIREFLIHKVAATGGHLGPNLGVVELTLALHRVFDSPHDPIIFDTGHQAYVHKMLTGRSQDFATLRKKGGLSGYPSRAESEHDWVESSHASAALSYADGLAKAFELTGHRNRHVVAVVGDGALTGGMCWEALNNIAASRRPVIIVVNDNGRSYAPTIGGVADHLATLRLQPAYEQALETGRDLVRAVPLVGGLWFRFLHSVKAGIKDSLSPQLLFTDLGLKYVGPVDGHDERAVEVALRSARRFGAPVIVHVVTRKGMGYPPAEADQAEQMHSTVPIDPATGQATKVAGPGWTATFSDALIGYAQKRRDIVAITAAMPGPTGLTAFGQRFPDRLFDVGIAEQHAMTSAAGLAMGGLHPVVAIYSTFLNRAFDQIMMDVALHKLPVTMVLDRAGITGSDGASHNGMWDLSMLGIVPGIRVAAPRDATRLREELGEALDVDDGPTALRFPKGDVGEDISALERRGGVDVLAAPADGLNHDVLLVAIGAFAPMALAVAKRLHNQGIGVTVIDPRWVLPVSDGVRELAVQHKLLVTLEDNGVNGGAGSAVSAALRRAEIDVPCRDVGLPQEFYEHASRSEVLADLGLTDQDVARRITGWVAALGTGVCASDAIPEHLD.

Thiamine diphosphate-binding positions include His71 and 112–114 (SHA). Asp144 is a Mg(2+) binding site. Residues 145–146 (GA), Asn173, Tyr284, and Glu365 each bind thiamine diphosphate. Asn173 is a Mg(2+) binding site.

Belongs to the transketolase family. DXPS subfamily. Homodimer. Requires Mg(2+) as cofactor. Thiamine diphosphate is required as a cofactor.

The catalysed reaction is D-glyceraldehyde 3-phosphate + pyruvate + H(+) = 1-deoxy-D-xylulose 5-phosphate + CO2. It participates in metabolic intermediate biosynthesis; 1-deoxy-D-xylulose 5-phosphate biosynthesis; 1-deoxy-D-xylulose 5-phosphate from D-glyceraldehyde 3-phosphate and pyruvate: step 1/1. Catalyzes the acyloin condensation reaction between C atoms 2 and 3 of pyruvate and glyceraldehyde 3-phosphate to yield 1-deoxy-D-xylulose-5-phosphate (DXP). The chain is 1-deoxy-D-xylulose-5-phosphate synthase from Mycobacterium bovis (strain ATCC BAA-935 / AF2122/97).